Reading from the N-terminus, the 398-residue chain is ATP-dependent RNA helicase eIF4A (398 aa).

Residues 25–53 (DSFDTMNLKPELLRGVYAYGFERPSAIQQ) carry the Q motif motif. The region spanning 56–226 (IMPVIKGHDV…TKFMRDPVRI (171 aa)) is the Helicase ATP-binding domain. 69–76 (AQSGTGKT) lines the ATP pocket. A DEAD box motif is present at residues 174-177 (DEAD). A Helicase C-terminal domain is found at 237-398 (GIKQFYIAVE…EMPMNVADLI (162 aa)).

Belongs to the DEAD box helicase family. eIF4A subfamily. Component of the eIF4F complex, which composition varies with external and internal environmental conditions. It is composed of at least eIF4A, eIF4E and eIF4G.

It localises to the cytoplasm. It catalyses the reaction ATP + H2O = ADP + phosphate + H(+). Functionally, ATP-dependent RNA helicase which is a subunit of the eIF4F complex involved in cap recognition and is required for mRNA binding to ribosome. In the current model of translation initiation, eIF4A unwinds RNA secondary structures in the 5'-UTR of mRNAs which is necessary to allow efficient binding of the small ribosomal subunit, and subsequent scanning for the initiator codon. This Botryotinia fuckeliana (strain B05.10) (Noble rot fungus) protein is ATP-dependent RNA helicase eIF4A (tif1).